A 322-amino-acid polypeptide reads, in one-letter code: Ribosomal RNA small subunit methyltransferase H (322 aa).

Residues 40 to 42, Asp-60, Phe-84, Asp-106, and Gln-113 contribute to the S-adenosyl-L-methionine site; that span reads GGH.

The protein belongs to the methyltransferase superfamily. RsmH family.

The protein localises to the cytoplasm. The enzyme catalyses cytidine(1402) in 16S rRNA + S-adenosyl-L-methionine = N(4)-methylcytidine(1402) in 16S rRNA + S-adenosyl-L-homocysteine + H(+). In terms of biological role, specifically methylates the N4 position of cytidine in position 1402 (C1402) of 16S rRNA. The polypeptide is Ribosomal RNA small subunit methyltransferase H (Aggregatibacter aphrophilus (strain NJ8700) (Haemophilus aphrophilus)).